An 884-amino-acid polypeptide reads, in one-letter code: Alanine--tRNA ligase (884 aa).

Zn(2+)-binding residues include His-565, His-569, Cys-672, and His-676.

This sequence belongs to the class-II aminoacyl-tRNA synthetase family. Zn(2+) is required as a cofactor.

Its subcellular location is the cytoplasm. The catalysed reaction is tRNA(Ala) + L-alanine + ATP = L-alanyl-tRNA(Ala) + AMP + diphosphate. Catalyzes the attachment of alanine to tRNA(Ala) in a two-step reaction: alanine is first activated by ATP to form Ala-AMP and then transferred to the acceptor end of tRNA(Ala). Also edits incorrectly charged Ser-tRNA(Ala) and Gly-tRNA(Ala) via its editing domain. The sequence is that of Alanine--tRNA ligase from Sphingopyxis alaskensis (strain DSM 13593 / LMG 18877 / RB2256) (Sphingomonas alaskensis).